A 664-amino-acid chain; its full sequence is Methionine--tRNA ligase (664 aa).

The 'HIGH' region motif lies at 13–23; it reads PYTNGPCHLGH. Zn(2+) contacts are provided by cysteine 144, cysteine 147, cysteine 156, and cysteine 160. The short motif at 327–331 is the 'KMSKS' region element; that stretch reads KFSKS. Lysine 330 contributes to the ATP binding site. Positions 566-664 constitute a tRNA-binding domain; it reads EFAKVEMKTG…TPVPSGTKIR (99 aa).

This sequence belongs to the class-I aminoacyl-tRNA synthetase family. MetG type 1 subfamily. As to quaternary structure, homodimer. The cofactor is Zn(2+).

It localises to the cytoplasm. It carries out the reaction tRNA(Met) + L-methionine + ATP = L-methionyl-tRNA(Met) + AMP + diphosphate. In terms of biological role, is required not only for elongation of protein synthesis but also for the initiation of all mRNA translation through initiator tRNA(fMet) aminoacylation. This is Methionine--tRNA ligase from Methanospirillum hungatei JF-1 (strain ATCC 27890 / DSM 864 / NBRC 100397 / JF-1).